The following is a 127-amino-acid chain: Apolipoprotein C-IV (127 aa).

An N-terminal signal peptide occupies residues 1–27 (MSLLRNRLQDLPALCLCVLVLACIGAC).

Belongs to the apolipoprotein C4 family.

The protein localises to the secreted. May participate in lipoprotein metabolism. The sequence is that of Apolipoprotein C-IV (APOC4) from Papio hamadryas (Hamadryas baboon).